A 175-amino-acid polypeptide reads, in one-letter code: Crossover junction endodeoxyribonuclease RuvC (175 aa).

Residues Asp8, Glu67, and Asp139 contribute to the active site. Mg(2+) contacts are provided by Asp8, Glu67, and Asp139.

This sequence belongs to the RuvC family. Homodimer which binds Holliday junction (HJ) DNA. The HJ becomes 2-fold symmetrical on binding to RuvC with unstacked arms; it has a different conformation from HJ DNA in complex with RuvA. In the full resolvosome a probable DNA-RuvA(4)-RuvB(12)-RuvC(2) complex forms which resolves the HJ. Requires Mg(2+) as cofactor.

It is found in the cytoplasm. The catalysed reaction is Endonucleolytic cleavage at a junction such as a reciprocal single-stranded crossover between two homologous DNA duplexes (Holliday junction).. Functionally, the RuvA-RuvB-RuvC complex processes Holliday junction (HJ) DNA during genetic recombination and DNA repair. Endonuclease that resolves HJ intermediates. Cleaves cruciform DNA by making single-stranded nicks across the HJ at symmetrical positions within the homologous arms, yielding a 5'-phosphate and a 3'-hydroxyl group; requires a central core of homology in the junction. The consensus cleavage sequence is 5'-(A/T)TT(C/G)-3'. Cleavage occurs on the 3'-side of the TT dinucleotide at the point of strand exchange. HJ branch migration catalyzed by RuvA-RuvB allows RuvC to scan DNA until it finds its consensus sequence, where it cleaves and resolves the cruciform DNA. The polypeptide is Crossover junction endodeoxyribonuclease RuvC (Marinobacter nauticus (strain ATCC 700491 / DSM 11845 / VT8) (Marinobacter aquaeolei)).